The primary structure comprises 268 residues: Tryptophan synthase alpha chain (268 aa).

Catalysis depends on proton acceptor residues Glu-49 and Asp-60.

It belongs to the TrpA family. Tetramer of two alpha and two beta chains.

It catalyses the reaction (1S,2R)-1-C-(indol-3-yl)glycerol 3-phosphate + L-serine = D-glyceraldehyde 3-phosphate + L-tryptophan + H2O. The protein operates within amino-acid biosynthesis; L-tryptophan biosynthesis; L-tryptophan from chorismate: step 5/5. Functionally, the alpha subunit is responsible for the aldol cleavage of indoleglycerol phosphate to indole and glyceraldehyde 3-phosphate. The sequence is that of Tryptophan synthase alpha chain from Escherichia coli O17:K52:H18 (strain UMN026 / ExPEC).